Reading from the N-terminus, the 396-residue chain is Cellular tumor antigen p53 (396 aa).

The tract at residues 1 to 44 (MADLAENVSLPLSQESFEDLWKMNLNLVAVQPPETESWVGYDNF) is transcription activation (acidic). A disordered region spans residues 63–89 (ATEPAPQPSISTLDTGSPPTSTVPTTS). A compositionally biased stretch (low complexity) spans 77 to 89 (TGSPPTSTVPTTS). A DNA-binding region spans residues 90–281 (DYPGALGFQL…KTEEINLKKQ (192 aa)). Residues C164, H167, C227, and C231 each coordinate Zn(2+). Residues 262 to 269 (RVCACPGR) form an interaction with DNA region. The Bipartite nuclear localization signal motif lies at 297–317 (KRAMKEASLPAPQPGASKKTK). The tract at residues 301-322 (KEASLPAPQPGASKKTKSSPAV) is disordered. The interval 325-356 (DEIYTLQIRGKEKYEMLKKFNDSLELSELVPV) is oligomerization. The Nuclear export signal signature appears at 339–350 (EMLKKFNDSLEL). The tract at residues 369–392 (KRVAKRDFGVGPKKRKKLLVKEEK) is basic (repression of DNA-binding).

Belongs to the p53 family. Binds DNA as a homotetramer. Zn(2+) serves as cofactor.

Its subcellular location is the cytoplasm. The protein resides in the nucleus. In terms of biological role, multifunctional transcription factor that induces cell cycle arrest, DNA repair or apoptosis upon binding to its target DNA sequence. Acts as a tumor suppressor in many tumor types; induces growth arrest or apoptosis depending on the physiological circumstances and cell type. Negatively regulates cell division by controlling expression of a set of genes required for this process. One of the activated genes is an inhibitor of cyclin-dependent kinases. Apoptosis induction seems to be mediated either by stimulation of BAX and FAS antigen expression, or by repression of Bcl-2 expression. The sequence is that of Cellular tumor antigen p53 (tp53) from Oncorhynchus mykiss (Rainbow trout).